The primary structure comprises 164 residues: MRALGIDPGTATMGWGIVEFNNGHLRLIDVGALTTPAGMPHPERLLQLYNGLRAIIERLRPDTAAVEELFFGKNVNTALTVGQARGVALLALAQAGIPVHEYKPLAVKQAVAGYGGADKRQMQEMVRLTLGLATIPRPDDAADALAIAICHAYTAPTLQRFGLS.

Residues Asp-7, Glu-67, and Asp-140 contribute to the active site. Mg(2+) is bound by residues Asp-7, Glu-67, and Asp-140.

Belongs to the RuvC family. Homodimer which binds Holliday junction (HJ) DNA. The HJ becomes 2-fold symmetrical on binding to RuvC with unstacked arms; it has a different conformation from HJ DNA in complex with RuvA. In the full resolvosome a probable DNA-RuvA(4)-RuvB(12)-RuvC(2) complex forms which resolves the HJ. The cofactor is Mg(2+).

It localises to the cytoplasm. The enzyme catalyses Endonucleolytic cleavage at a junction such as a reciprocal single-stranded crossover between two homologous DNA duplexes (Holliday junction).. Its function is as follows. The RuvA-RuvB-RuvC complex processes Holliday junction (HJ) DNA during genetic recombination and DNA repair. Endonuclease that resolves HJ intermediates. Cleaves cruciform DNA by making single-stranded nicks across the HJ at symmetrical positions within the homologous arms, yielding a 5'-phosphate and a 3'-hydroxyl group; requires a central core of homology in the junction. The consensus cleavage sequence is 5'-(A/T)TT(C/G)-3'. Cleavage occurs on the 3'-side of the TT dinucleotide at the point of strand exchange. HJ branch migration catalyzed by RuvA-RuvB allows RuvC to scan DNA until it finds its consensus sequence, where it cleaves and resolves the cruciform DNA. The protein is Crossover junction endodeoxyribonuclease RuvC of Chloroflexus aurantiacus (strain ATCC 29364 / DSM 637 / Y-400-fl).